The chain runs to 372 residues: Chloromuconate cycloisomerase (372 aa).

Lys158 acts as the Proton acceptor in catalysis. Residues Asp187, Glu213, and Asp238 each contribute to the Mn(2+) site. Glu316 functions as the Proton donor in the catalytic mechanism.

It belongs to the mandelate racemase/muconate lactonizing enzyme family. Mn(2+) serves as cofactor.

The catalysed reaction is 2-[(2R)-2-chloro-2,5-dihydro-5-oxofuryl]acetate = 3-chloro-cis,cis-muconate + H(+). The protein operates within aromatic compound metabolism; 3-chlorocatechol degradation. This is Chloromuconate cycloisomerase (tfdDII) from Cupriavidus pinatubonensis (strain JMP 134 / LMG 1197) (Cupriavidus necator (strain JMP 134)).